We begin with the raw amino-acid sequence, 439 residues long: MNCEKESQMTIASQSIEDFKECLYQMQEARKSVTNEILETGHIKADQVQIFKSTLEEMNDERTSKNHIRDIHSRGTTFGINIQDEIKGLQKDHHFLDAFAVESDKENNSFANVLKLCDLPGLLSKFVDDEIRFEKEVAECKAFLMDLIDTSTTGGIKPLFITDWDGTMKDYCSQYATNLQPAYSAIVMGVFSRLFTRAFAVLTAGPLRHPGILDLTALPINGPVLFSGSWGREWWLGGRRIVHDDGIPEEGSVAIGQLCEQLDEILHEGEFVQFALVGSGVQRKVDRLTLGVQTVFKQVPEDLSARYIDAVRERIHRVDPNSQYLVLENCSPLEIEVCVHSSGAVWNKGDGVAALVESLHDSLKVGKVCVAGDTASDVPMLKKAADENPENVRALFVNINKQLQENITNIVGDAKRVCFISSPDVAHAAFAQIISEFSG.

D163 and D165 together coordinate Mg(2+). The active-site Proton donor/acceptor is the D165. Substrate is bound at residue 282–284 (QRK). A Mg(2+)-binding site is contributed by D373.

The protein belongs to the gob-1 trehalose phosphatase family. Requires Mg(2+) as cofactor. In terms of tissue distribution, ubiquitously expressed. Strong expression in intestine.

The enzyme catalyses alpha,alpha-trehalose 6-phosphate + H2O = alpha,alpha-trehalose + phosphate. Its function is as follows. Catalyzes the hydrolysis of trehalose 6-phosphate to trehalose and phosphate; prevents the accumulation of toxic levels of trehalose 6-phosphate. The chain is Trehalose-phosphatase from Caenorhabditis elegans.